A 365-amino-acid polypeptide reads, in one-letter code: Potassium channel subfamily K member 9 (365 aa).

The Cytoplasmic portion of the chain corresponds to 1–8; it reads MKKQNVRT. A helical transmembrane segment spans residues 9–29; the sequence is LSLIACTFTYLLVGAAVFDAL. Residues 30-88 lie on the Extracellular side of the membrane; that stretch reads ESDHEMREEEKLKAEEIRIRGKYNISTEDYRQLELVILQSEPHRAGVQWKFAGSFYFAI. N53 carries N-linked (GlcNAc...) asparagine glycosylation. The pore-forming intramembrane region spans 89-101; the sequence is TVITTIGYGHAAP. The K(+) site is built by T93, I94, G95, and Y96. Positions 93–98 are selectivity filter 1; sequence TIGYGH. The Extracellular segment spans residues 102–107; the sequence is GTDAGK. A helical membrane pass occupies residues 108–128; sequence AFCMFYAVLGIPLTLVMFQSL. At 129 to 158 the chain is on the cytoplasmic side; that stretch reads GERMNTFVRYLLKRIKKCCGMRNTEVSMEN. Residues 159–179 traverse the membrane as a helical segment; the sequence is MVTVGFFSCMGTLCIGAAAFS. Topologically, residues 180–194 are extracellular; it reads QCEEWSFFHAYYYCF. The segment at residues 195-207 is an intramembrane region (pore-forming); the sequence is ITLTTIGFGDYVA. K(+) contacts are provided by T199, I200, G201, and F202. The interval 199–204 is selectivity filter 2; that stretch reads TIGFGD. Residues 208–218 are Extracellular-facing; it reads LQSKGALQRKP. Residues 219-239 form a helical membrane-spanning segment; sequence FYVAFSFMYILVGLTVIGAFL. The Cytoplasmic portion of the chain corresponds to 240–365; that stretch reads NLVVLRFLTM…HRLMLRRKSV (126 aa). The segment at 243 to 248 is X-gate; the sequence is VLRFLT.

It belongs to the two pore domain potassium channel (TC 1.A.1.8) family. Homodimer. Heterodimer with KCNK1. Heterodimer with KCNK3. As to expression, highly expressed in the brain.

The protein localises to the cell membrane. It localises to the mitochondrion inner membrane. Its subcellular location is the cell projection. It is found in the dendrite. The enzyme catalyses K(+)(in) = K(+)(out). It carries out the reaction Na(+)(in) = Na(+)(out). Inhibited by extracellular acidification. Functionally, k(+) channel that conducts voltage-dependent outward rectifying currents upon membrane depolarization. Voltage sensing is coupled to K(+) electrochemical gradient in an 'ion flux gating' mode where outward but not inward ion flow opens the gate. Changes ion selectivity and becomes permeable to Na(+) ions in response to extracellular acidification. Protonation of the pH sensor His-98 stabilizes C-type inactivation conformation likely converting the channel from outward K(+)-conducting, to inward Na(+)-conducting to nonconductive state. Homo- and heterodimerizes to form functional channels with distinct regulatory and gating properties. Allows K(+) currents with fast-gating kinetics important for the repolarization and hyperpolarization phases of action potentials. In granule neurons, hyperpolarizes the resting membrane potential to limit intrinsic neuronal excitability, but once the action potential threshold is reached, supports high-frequency action potential firing and increased neuronal excitability. Homomeric and/or heteromeric KCNK3:KCNK9 channels operate in cerebellar granule cells, whereas heteromeric KCNK1:KCNK9 enables currents in hippocampal dentate gyrus granule neurons. Dispensable for central chemosensory respiration i.e. breathing controlled by brainstem CO2/pH, it rather conducts pH-sensitive currents and controls the firing rate of serotonergic raphe neurons involved in potentiation of the respiratory chemoreflex. In retinal ganglion cells, mediates outward rectifying currents that regulate action potentials in response to acidification of the synaptic cleft. Involved in transmission of image-forming and nonimage-forming visual information in the retina. In adrenal gland, contributes to the maintenance of a hyperpolarized resting membrane potential of aldosterone-producing cells at zona glomerulosa and limits aldosterone release as part of a regulatory mechanism that controls arterial blood pressure and electrolyte homeostasis. This Cavia porcellus (Guinea pig) protein is Potassium channel subfamily K member 9 (KCNK9).